The chain runs to 385 residues: Leucine aminopeptidase 1 (385 aa).

The first 20 residues, 1 to 20 (MKLPSLLSLGVAASTTIVAA), serve as a signal peptide directing secretion. The propeptide occupies 21 to 87 (VPDQKPIGDT…FPKTFAQTTV (67 aa)). Residue N177 is glycosylated (N-linked (GlcNAc...) asparagine). Zn(2+) is bound by residues H185, D204, E243, and D270. Cysteines 319 and 323 form a disulfide. H352 provides a ligand contact to Zn(2+).

The protein belongs to the peptidase M28 family. M28E subfamily. Monomer. Zn(2+) is required as a cofactor.

Its subcellular location is the secreted. In terms of biological role, extracellular aminopeptidase that allows assimilation of proteinaceous substrates. The protein is Leucine aminopeptidase 1 (LAP1) of Ajellomyces capsulatus (strain NAm1 / WU24) (Darling's disease fungus).